The following is a 425-amino-acid chain: Histidine--tRNA ligase (425 aa).

The protein belongs to the class-II aminoacyl-tRNA synthetase family. As to quaternary structure, homodimer.

It localises to the cytoplasm. It carries out the reaction tRNA(His) + L-histidine + ATP = L-histidyl-tRNA(His) + AMP + diphosphate + H(+). In Erwinia tasmaniensis (strain DSM 17950 / CFBP 7177 / CIP 109463 / NCPPB 4357 / Et1/99), this protein is Histidine--tRNA ligase.